The sequence spans 76 residues: Vasotab-TY1 (76 aa).

The signal sequence occupies residues 1-21; that stretch reads MKFTLFSVLVVLLIATFVAAD. The region spanning 22–76 is the Kazal-like domain; the sequence is DCPRICTADFRPVCGTPSGGRRSANRTFGNQCSLDSHNCLNKGDTYDKLHDGECK. 3 cysteine pairs are disulfide-bonded: Cys-23/Cys-60, Cys-27/Cys-53, and Cys-35/Cys-75.

Expressed by the salivary gland.

It localises to the secreted. Functionally, vasodilator protein that inhibits vasoconstriction of isolated rat femoral artery induced by phenylephrine. Since platelet aggregation and vasoconstriction are key hemostatic responses, particularly in small wounds, this protein likely participates in the antihemostatic responses during blood feeding. Blocks L-type calcium channels (Cav1/CACNA1) in left ventricular myocytes isolated from rat hearts. The chain is Vasotab-TY1 from Tabanus yao (Horsefly).